A 178-amino-acid polypeptide reads, in one-letter code: Arginine repressor (178 aa).

The tract at residues 1–20 (MTEAQEPEYGGPSVPQTRTA) is disordered.

Belongs to the ArgR family.

The protein resides in the cytoplasm. Its pathway is amino-acid biosynthesis; L-arginine biosynthesis [regulation]. Its function is as follows. Regulates arginine biosynthesis genes. In Streptomyces griseus subsp. griseus (strain JCM 4626 / CBS 651.72 / NBRC 13350 / KCC S-0626 / ISP 5235), this protein is Arginine repressor.